Here is a 348-residue protein sequence, read N- to C-terminus: Hereditary hemochromatosis protein homolog (348 aa).

A signal peptide spans 1–22 (MGPRARPALFFLILLRTVAAQG). Residues 23-114 (RPPRSHSLRY…IMDNHNHSKE (92 aa)) are alpha-1. Topologically, residues 23–306 (RPPRSHSLRY…WEPSLSNTLV (284 aa)) are extracellular. Residues Asn110, Asn130, and Asn234 are each glycosylated (N-linked (GlcNAc...) asparagine). An alpha-2 region spans residues 115 to 205 (SHTLQVILGC…ELGRGVLDQQ (91 aa)). Intrachain disulfides connect Cys124–Cys187 and Cys225–Cys282. Positions 206-297 (VPPLVKVTHH…GLDQPLTATW (92 aa)) are alpha-3. The Ig-like C1-type domain maps to 207 to 296 (PPLVKVTHHV…PGLDQPLTAT (90 aa)). The tract at residues 298–306 (EPSLSNTLV) is connecting peptide. Residues 307-330 (TGVISGIAVCVIIFFIGILFRILR) form a helical membrane-spanning segment. Residues 331 to 348 (KRQASRGAMGDYVLGECE) lie on the Cytoplasmic side of the membrane.

The protein belongs to the MHC class I family. As to quaternary structure, binds TFR through the extracellular domain in a pH-dependent manner.

It is found in the cell membrane. Functionally, binds to transferrin receptor (TFR) and reduces its affinity for iron-loaded transferrin. This Ceratotherium simum (White rhinoceros) protein is Hereditary hemochromatosis protein homolog (HFE).